The following is a 223-amino-acid chain: Octanoyltransferase (223 aa).

Positions 35–214 constitute a BPL/LPL catalytic domain; sequence GEARELIWLL…HFPAMLAGLR (180 aa). Substrate-binding positions include 74–81, 145–147, and 158–160; these read RGGRYTYH, AIG, and GFS. C176 (acyl-thioester intermediate) is an active-site residue.

The protein belongs to the LipB family.

It is found in the cytoplasm. The enzyme catalyses octanoyl-[ACP] + L-lysyl-[protein] = N(6)-octanoyl-L-lysyl-[protein] + holo-[ACP] + H(+). The protein operates within protein modification; protein lipoylation via endogenous pathway; protein N(6)-(lipoyl)lysine from octanoyl-[acyl-carrier-protein]: step 1/2. In terms of biological role, catalyzes the transfer of endogenously produced octanoic acid from octanoyl-acyl-carrier-protein onto the lipoyl domains of lipoate-dependent enzymes. Lipoyl-ACP can also act as a substrate although octanoyl-ACP is likely to be the physiological substrate. This is Octanoyltransferase from Rhizorhabdus wittichii (strain DSM 6014 / CCUG 31198 / JCM 15750 / NBRC 105917 / EY 4224 / RW1) (Sphingomonas wittichii).